The sequence spans 327 residues: MYQSLMTVRETQIAIKEVKTFFEDQLAKRLELFRVSAPLFVTKKSGLNDHLNGVERPIEFDMLHSGEELEIVHSLAKWKRFALHEYGYEAGEGLYTNMNAIRRDEELDATHSIYVDQWDWEKIVQKEWRTVDYLQKTVLTIYGIFKDLEDHLFEKYPFLGKYLPEEIVFVTSQELEDKYPELTPKDREHAIAKEHGAVFIIGIGDALRSGEKHDGRAADYDDWKLNGDILFWHPVLQSSFELSSMGIRVDSKSLDEQLTKTGEDYKREYDFHKGILEDVLPLTIGGGIGQSRMCMYFLRKAHIGEVQSSVWPDDLREACKKENIHLF.

Belongs to the class-II aminoacyl-tRNA synthetase family. AsnA subfamily.

Its subcellular location is the cytoplasm. It carries out the reaction L-aspartate + NH4(+) + ATP = L-asparagine + AMP + diphosphate + H(+). The protein operates within amino-acid biosynthesis; L-asparagine biosynthesis; L-asparagine from L-aspartate (ammonia route): step 1/1. In Bacillus cereus (strain AH187), this protein is Aspartate--ammonia ligase.